A 218-amino-acid chain; its full sequence is Phosphoribosylformylglycinamidine synthase subunit PurQ (218 aa).

Residues 2–218 (SIAVLRFPGT…GARMLRGLAC (217 aa)) form the Glutamine amidotransferase type-1 domain. C86 acts as the Nucleophile in catalysis. Active-site residues include H195 and E197.

Part of the FGAM synthase complex composed of 1 PurL, 1 PurQ and 2 PurS subunits.

Its subcellular location is the cytoplasm. The catalysed reaction is N(2)-formyl-N(1)-(5-phospho-beta-D-ribosyl)glycinamide + L-glutamine + ATP + H2O = 2-formamido-N(1)-(5-O-phospho-beta-D-ribosyl)acetamidine + L-glutamate + ADP + phosphate + H(+). It catalyses the reaction L-glutamine + H2O = L-glutamate + NH4(+). It functions in the pathway purine metabolism; IMP biosynthesis via de novo pathway; 5-amino-1-(5-phospho-D-ribosyl)imidazole from N(2)-formyl-N(1)-(5-phospho-D-ribosyl)glycinamide: step 1/2. Functionally, part of the phosphoribosylformylglycinamidine synthase complex involved in the purines biosynthetic pathway. Catalyzes the ATP-dependent conversion of formylglycinamide ribonucleotide (FGAR) and glutamine to yield formylglycinamidine ribonucleotide (FGAM) and glutamate. The FGAM synthase complex is composed of three subunits. PurQ produces an ammonia molecule by converting glutamine to glutamate. PurL transfers the ammonia molecule to FGAR to form FGAM in an ATP-dependent manner. PurS interacts with PurQ and PurL and is thought to assist in the transfer of the ammonia molecule from PurQ to PurL. This chain is Phosphoribosylformylglycinamidine synthase subunit PurQ, found in Wolinella succinogenes (strain ATCC 29543 / DSM 1740 / CCUG 13145 / JCM 31913 / LMG 7466 / NCTC 11488 / FDC 602W) (Vibrio succinogenes).